The following is a 750-amino-acid chain: Photosystem I P700 chlorophyll a apoprotein A1 (750 aa).

8 consecutive transmembrane segments (helical) span residues 70–93 (VFSAHFGQLSIIFLWLSGMYFHGA), 156–179 (LYCTAIGALIFASLMLFAGWFHYH), 195–219 (LNHHLAGLLGLGSLSWAGHQIHVSL), 291–309 (IAHHHLAIAILFLIAGHMY), 346–369 (WHAQLSLNLAMLGSTTIVVAHHMY), 385–411 (LSLFTHHMWIGGFLIVGAAAHAAIFMV), 433–455 (AIISHLNWVCIFLGFHSFGLYIH), and 531–549 (FLVHHIHAFTIHVTVLILL). Residues C573 and C582 each contribute to the [4Fe-4S] cluster site. 2 helical membrane-spanning segments follow: residues 589-610 (HVFLGLFWMYNSISVVIFHFSW) and 664-686 (LSAYGLFFLGAHFVWAFSLMFLF). H675 contributes to the chlorophyll a' binding site. Residues M683 and Y691 each coordinate chlorophyll a. W692 provides a ligand contact to phylloquinone. The helical transmembrane segment at 724–744 (AVGVTHYLLGGIATTWAFFLA) threads the bilayer.

Belongs to the PsaA/PsaB family. The PsaA/B heterodimer binds the P700 chlorophyll special pair and subsequent electron acceptors. PSI consists of a core antenna complex that captures photons, and an electron transfer chain that converts photonic excitation into a charge separation. The eukaryotic PSI reaction center is composed of at least 11 subunits. P700 is a chlorophyll a/chlorophyll a' dimer, A0 is one or more chlorophyll a, A1 is one or both phylloquinones and FX is a shared 4Fe-4S iron-sulfur center. serves as cofactor.

It is found in the plastid. It localises to the chloroplast thylakoid membrane. The enzyme catalyses reduced [plastocyanin] + hnu + oxidized [2Fe-2S]-[ferredoxin] = oxidized [plastocyanin] + reduced [2Fe-2S]-[ferredoxin]. PsaA and PsaB bind P700, the primary electron donor of photosystem I (PSI), as well as the electron acceptors A0, A1 and FX. PSI is a plastocyanin-ferredoxin oxidoreductase, converting photonic excitation into a charge separation, which transfers an electron from the donor P700 chlorophyll pair to the spectroscopically characterized acceptors A0, A1, FX, FA and FB in turn. Oxidized P700 is reduced on the lumenal side of the thylakoid membrane by plastocyanin. This chain is Photosystem I P700 chlorophyll a apoprotein A1, found in Oryza nivara (Indian wild rice).